The chain runs to 326 residues: Metal-binding protein YtgA (326 aa).

The N-terminal stretch at 1-21 (MFFLHVRKYKHVIGGLLCLAG) is a signal peptide. Fe(2+)-binding residues include His75, His141, His207, and Asp299.

It belongs to the bacterial solute-binding protein 9 family. In terms of assembly, monomer.

It is found in the periplasm. Part of the ATP-binding cassette (ABC) transport system YtgABCD involved in metal import. Binds Fe(2+), Mn(2+) and Ni(2+), with a preference for Fe(2+) and delivers them to the membrane permease for translocation into the cytoplasm. The sequence is that of Metal-binding protein YtgA from Chlamydia muridarum (strain MoPn / Nigg).